The sequence spans 238 residues: LexA repressor (238 aa).

The H-T-H motif DNA-binding region spans 26–46 (FDEMKDALDLASKSGIHRLIT). Residues Ser158 and Lys196 each act as for autocatalytic cleavage activity in the active site.

Belongs to the peptidase S24 family. In terms of assembly, homodimer.

It carries out the reaction Hydrolysis of Ala-|-Gly bond in repressor LexA.. Its function is as follows. Represses a number of genes involved in the response to DNA damage (SOS response), including recA and lexA. In the presence of single-stranded DNA, RecA interacts with LexA causing an autocatalytic cleavage which disrupts the DNA-binding part of LexA, leading to derepression of the SOS regulon and eventually DNA repair. The protein is LexA repressor of Rhizobium meliloti (strain 1021) (Ensifer meliloti).